Here is a 336-residue protein sequence, read N- to C-terminus: F420-dependent glucose-6-phosphate dehydrogenase (336 aa).

Coenzyme F420-(gamma-Glu)n is bound at residue D39. The Proton donor role is filled by H40. Coenzyme F420-(gamma-Glu)n contacts are provided by residues T76 and 107–108 (TG). Residue E109 is the Proton acceptor of the active site. Residues N112, 177–178 (GG), and 180–181 (AV) contribute to the coenzyme F420-(gamma-Glu)n site. The substrate site is built by T195, K198, K259, and R283.

The protein belongs to the F420-dependent glucose-6-phosphate dehydrogenase family. Homodimer.

The catalysed reaction is oxidized coenzyme F420-(gamma-L-Glu)(n) + D-glucose 6-phosphate + H(+) = 6-phospho-D-glucono-1,5-lactone + reduced coenzyme F420-(gamma-L-Glu)(n). Catalyzes the coenzyme F420-dependent oxidation of glucose 6-phosphate (G6P) to 6-phosphogluconolactone. Appears to have a role in resistance to oxidative stress, via its consumption of G6P that serves as a source of reducing power to combat oxidative stress in mycobacteria. More precisely, is likely involved in a F420-dependent anti-oxidant mechanism that protects M.tuberculosis against oxidative stress and bactericidal agents. In terms of biological role, is essential for the bioreductive activation of the bicyclic 4-nitroimidazole prodrug PA-824 (nitroimidazo-oxazine) developed for anti-tuberculosis therapy against both replicating and persistent bacteria. It does not interact directly with PA-824 but, rather, provides reduced F420 to the deazaflavin-dependent nitroreductase Ddn, which in turn activates PA-824. The protein is F420-dependent glucose-6-phosphate dehydrogenase (fgd1) of Mycobacterium tuberculosis (strain CDC 1551 / Oshkosh).